The following is a 380-amino-acid chain: Apolipoprotein A-IV (380 aa).

The N-terminal stretch at 1–20 (MFLKAVVLSLALVAVTGAEA) is a signal peptide. A run of 13 repeats spans residues 33–54 (DYFS…KSEL), 60–81 (TLFQ…KKLV), 82–103 (PFAT…EEIR), 115–136 (PHAT…QRLG), 137–158 (PYAE…RQLT), 159–180 (PYVE…ASLA), 181–202 (PYAE…GRLT), 203–224 (PYAD…RSLA), 225–246 (PYAQ…FQMK), 247–268 (KHAE…QGLV), 269–286 (PLVN…EDLQ), 287–308 (KSLA…RTVG), and 309–330 (PYGE…QKLG). The 13 X 22 AA approximate tandem repeats stretch occupies residues 33–330 (DYFSQLGNNA…QLDTLRQKLG (298 aa)). The disordered stretch occupies residues 361–380 (KESQAPALPAQEEMPVPLGG).

Belongs to the apolipoprotein A1/A4/E family. In terms of assembly, homodimer. Secreted in plasma.

It localises to the secreted. Functionally, may have a role in chylomicrons and VLDL secretion and catabolism. Required for efficient activation of lipoprotein lipase by ApoC-II; potent activator of LCAT. Apoa-IV is a major component of HDL and chylomicrons. The sequence is that of Apolipoprotein A-IV (APOA4) from Bos taurus (Bovine).